A 104-amino-acid polypeptide reads, in one-letter code: Phosphoribosyl-ATP pyrophosphatase (104 aa).

This sequence belongs to the PRA-PH family.

It localises to the cytoplasm. It carries out the reaction 1-(5-phospho-beta-D-ribosyl)-ATP + H2O = 1-(5-phospho-beta-D-ribosyl)-5'-AMP + diphosphate + H(+). It participates in amino-acid biosynthesis; L-histidine biosynthesis; L-histidine from 5-phospho-alpha-D-ribose 1-diphosphate: step 2/9. This Streptococcus gordonii (strain Challis / ATCC 35105 / BCRC 15272 / CH1 / DL1 / V288) protein is Phosphoribosyl-ATP pyrophosphatase.